The primary structure comprises 143 residues: Large ribosomal subunit protein uL15 (143 aa).

Positions 1 to 54 are disordered; sequence MELNSIKPADGAKHAARRVGRGIGSGLGKTAGRGHKGQKSRSGGYHKVGFEGGQ. Residues 21–31 are compositionally biased toward gly residues; the sequence is RGIGSGLGKTA.

The protein belongs to the universal ribosomal protein uL15 family. Part of the 50S ribosomal subunit.

Its function is as follows. Binds to the 23S rRNA. The chain is Large ribosomal subunit protein uL15 from Acidovorax ebreus (strain TPSY) (Diaphorobacter sp. (strain TPSY)).